Reading from the N-terminus, the 946-residue chain is Bifunctional glutamine synthetase adenylyltransferase/adenylyl-removing enzyme (946 aa).

An adenylyl removase region spans residues Met1–Glu440. An adenylyl transferase region spans residues Ser449 to Glu946.

Belongs to the GlnE family. Mg(2+) is required as a cofactor.

It catalyses the reaction [glutamine synthetase]-O(4)-(5'-adenylyl)-L-tyrosine + phosphate = [glutamine synthetase]-L-tyrosine + ADP. The catalysed reaction is [glutamine synthetase]-L-tyrosine + ATP = [glutamine synthetase]-O(4)-(5'-adenylyl)-L-tyrosine + diphosphate. Its function is as follows. Involved in the regulation of glutamine synthetase GlnA, a key enzyme in the process to assimilate ammonia. When cellular nitrogen levels are high, the C-terminal adenylyl transferase (AT) inactivates GlnA by covalent transfer of an adenylyl group from ATP to specific tyrosine residue of GlnA, thus reducing its activity. Conversely, when nitrogen levels are low, the N-terminal adenylyl removase (AR) activates GlnA by removing the adenylyl group by phosphorolysis, increasing its activity. The regulatory region of GlnE binds the signal transduction protein PII (GlnB) which indicates the nitrogen status of the cell. The protein is Bifunctional glutamine synthetase adenylyltransferase/adenylyl-removing enzyme of Shigella flexneri.